A 428-amino-acid polypeptide reads, in one-letter code: MQTLIWKDLTEQEKKQALTRPAISAAGNIKDAVDAIRENVVANGDKALFELSEKFDRVKLNSLEVSEQQIEEAAQRLPEELKQAIQNAKKNIEAFHLAQVPVEADVETQSGVRCQVLTRPINRVGLYIPGGSAPLFSTVLMLAIPAKIAGCKKIVLCSPPPIADAILYAANLCGVETIYQVGGAQAVVAMAFGTETVAKVDKIFGPGNAFVTEAKRQVSQAVNGAAIDMQAGPSEVLVLADENADPDFVASDLLSQAEHGADSQVILVTPSERLALETELAVERQLTTLPRSEIAQKALAHSRIFIAENLQQCVEISNEYAPEHLVVQVQNARDLLSNIDNAGSIFLGAYSPESMGDYASGTNHVLPTYGYTRTSSSLGLADFSKRMTVQELSPQGFKDLAKTVEVMAAAERLDAHKQAVSIRLAKIK.

NAD(+)-binding residues include Y127, Q185, and N208. Positions 234, 256, and 259 each coordinate substrate. Residues Q256 and H259 each contribute to the Zn(2+) site. Active-site proton acceptor residues include E323 and H324. Substrate contacts are provided by H324, D357, E411, and H416. D357 lines the Zn(2+) pocket. H416 provides a ligand contact to Zn(2+).

Belongs to the histidinol dehydrogenase family. Zn(2+) is required as a cofactor.

It carries out the reaction L-histidinol + 2 NAD(+) + H2O = L-histidine + 2 NADH + 3 H(+). It functions in the pathway amino-acid biosynthesis; L-histidine biosynthesis; L-histidine from 5-phospho-alpha-D-ribose 1-diphosphate: step 9/9. Catalyzes the sequential NAD-dependent oxidations of L-histidinol to L-histidinaldehyde and then to L-histidine. This Mannheimia succiniciproducens (strain KCTC 0769BP / MBEL55E) protein is Histidinol dehydrogenase.